We begin with the raw amino-acid sequence, 347 residues long: Probable G-protein coupled receptor 148 (347 aa).

At 1–51 (MGDELAPCPVGTTAWPALIQLISKTPCMPQAASNTSLGLGDLRVPSSMLYW) the chain is on the extracellular side. The N-linked (GlcNAc...) asparagine glycan is linked to Asn34. Residues 52 to 72 (LFLPSSLLAAATLAVSPLLLV) form a helical membrane-spanning segment. Over 73-85 (TILRNQRLRQEPH) the chain is Cytoplasmic. A helical transmembrane segment spans residues 86 to 106 (YLLPANILLSDLAYILLHMLI). Over 107–130 (SSSSLGGWELGRMACGILTDAVFA) the chain is Extracellular. Residues 131–151 (ACTSTILSFTAIVLHTYLAVI) form a helical membrane-spanning segment. Over 152–165 (HPLRYLSFMSHGAA) the chain is Cytoplasmic. The chain crosses the membrane as a helical span at residues 166-186 (WKAVALIWLVACCFPTFLIWL). Over 187-214 (SKWQDAQLEEQGASYILPPSMGTQPGCG) the chain is Extracellular. A helical transmembrane segment spans residues 215-235 (LLVIVTYTSILCVLFLCTALI). Topologically, residues 236–261 (ANCFWRIYAEAKTSGIWGQGYSRARG) are cytoplasmic. Residues 262–282 (TLLIHSVLITLYVSTGVVFSL) traverse the membrane as a helical segment. Residues 283–299 (DMVLTRYHHIDSGTHTW) lie on the Extracellular side of the membrane. Residues 300–322 (LLAANSEVLMMLPRAMLTYLYLL) form a helical membrane-spanning segment. Residues 323-347 (RYRQLLGMVRGHLPSRRHQAIFTIS) lie on the Cytoplasmic side of the membrane.

It belongs to the G-protein coupled receptor 1 family. In terms of tissue distribution, expression restricted to nervous system and testis. Is also detected in several tumors types, most notably prostate cancer.

The protein localises to the cell membrane. In terms of biological role, orphan receptor. In Homo sapiens (Human), this protein is Probable G-protein coupled receptor 148 (GPR148).